The sequence spans 159 residues: Antitoxin Xre (159 aa).

This sequence belongs to the MbcA/ParS/Xre antitoxin family. In terms of assembly, homodimer. Forms a complex with cognate toxin Res; the 2 toxin molecules dimerize and each contacts an Xre homodimer. Most Res-Xre contacts are between the antitoxin molecule closest to the toxin.

Functionally, probable antitoxin component of a type II toxin-antitoxin (TA) system. In vivo probably neutralizes the toxic effect of cognate toxin Res. The chain is Antitoxin Xre from Pseudomonas putida (strain ATCC 47054 / DSM 6125 / CFBP 8728 / NCIMB 11950 / KT2440).